A 127-amino-acid polypeptide reads, in one-letter code: MSNIPADLKYVASHEWVRDEGDGVVTVGVTFHAQELLGDIVYIELPAVGQVLAEGDGAGVVESVKAASDVYAPIAGEVLEVNADLESAPETVNADPYGAGWFFKLKLVNPADMASLLDAAAYEKEVG.

Residues 24 to 106 (VVTVGVTFHA…YGAGWFFKLK (83 aa)) form the Lipoyl-binding domain. Lys-65 carries the N6-lipoyllysine modification.

Belongs to the GcvH family. As to quaternary structure, the glycine cleavage system is composed of four proteins: P, T, L and H. The cofactor is (R)-lipoate.

In terms of biological role, the glycine cleavage system catalyzes the degradation of glycine. The H protein shuttles the methylamine group of glycine from the P protein to the T protein. In Laribacter hongkongensis (strain HLHK9), this protein is Glycine cleavage system H protein.